We begin with the raw amino-acid sequence, 998 residues long: Calcium-transporting ATPase 3, endoplasmic reticulum-type (998 aa).

At 1-48 (MEDAYARSVSEVLDFFGVDPTKGLSDSQVVHHSRLYGRNVLPEEKRTP) the chain is on the cytoplasmic side. Residues 49-69 (FWKLVLKQFDDLLVKILIVAA) form a helical membrane-spanning segment. The Lumenal segment spans residues 70-89 (IVSFVLALANGETGLTAFLE). A helical membrane pass occupies residues 90 to 109 (PFVILLILAANAAVGVITET). Topologically, residues 110–250 (NAEKALEELR…DEATPLKKKL (141 aa)) are cytoplasmic. The helical transmembrane segment at 251–270 (DEFGSFLAKVIAGICVLVWV) threads the bilayer. Residues 271 to 291 (VNIGHFSDPSHGGFFKGAIHY) are Lumenal-facing. The chain crosses the membrane as a helical span at residues 292 to 309 (FKIAVALAVAAIPEGLPA). The Ca(2+) site is built by Val300, Ala301, Ile303, and Glu305. At 310–746 (VVTTCLALGT…AEGRAIYNNT (437 aa)) the chain is on the cytoplasmic side. Asp347 serves as the catalytic 4-aspartylphosphate intermediate. The Mg(2+) site is built by Asp692 and Asp696. A helical transmembrane segment spans residues 747–766 (KQFIRYMISSNIGEVVCIFV). Asn757 and Glu760 together coordinate Ca(2+). Residues 767-776 (AAVLGIPDTL) lie on the Lumenal side of the membrane. Residues 777–797 (APVQLLWVNLVTDGLPATAIG) traverse the membrane as a helical segment. Positions 785, 788, and 789 each coordinate Ca(2+). The Cytoplasmic portion of the chain corresponds to 798–817 (FNKQDSDVMKAKPRKVGEAV). The chain crosses the membrane as a helical span at residues 818–840 (VTGWLFFRYLVIGVYVGLATVAG). The Lumenal segment spans residues 841-883 (FIWWFVYSDGGPKLTYSELMNFETCALRETTYPCSIFEDRHPS). A helical membrane pass occupies residues 884–903 (TVAMTVLVVVEMFNALNNLS). Glu894 serves as a coordination point for Ca(2+). Over 904–916 (ENQSLLVITPRSN) the chain is Cytoplasmic. A helical transmembrane segment spans residues 917 to 935 (LWLVGSIILTMLLHVLILY). The Lumenal segment spans residues 936 to 950 (VHPLAVLFSVTPLSW). A helical transmembrane segment spans residues 951–971 (AEWTAVLYLSFPVIIIDELLK). Residues 972–998 (FLSRNTGMRFRFRLRKADLLPKDRRDK) are Cytoplasmic-facing.

The protein belongs to the cation transport ATPase (P-type) (TC 3.A.3) family. Type IIA subfamily. As to expression, expressed in root cap, in elongation and differentiation zones of roots, in vascular tissues of roots, leaves, floral pedicels and style, in leaves, including hydathodes and guard cells, in stamens, in petals, in sepals and in siliques.

The protein resides in the golgi apparatus membrane. Its subcellular location is the endosome membrane. It is found in the prevacuolar compartment membrane. It carries out the reaction Ca(2+)(in) + ATP + H2O = Ca(2+)(out) + ADP + phosphate + H(+). Its function is as follows. This magnesium-dependent enzyme catalyzes the hydrolysis of ATP coupled with the translocation of calcium from the cytosol to an endomembrane compartment. Involved in calcium-enhanced root growth, in tolerance to toxic levels of manganese and in secretory processes. Has a crucial role in manganese nutrition, but is not involved in transporting copper, iron or zinc. The protein is Calcium-transporting ATPase 3, endoplasmic reticulum-type of Arabidopsis thaliana (Mouse-ear cress).